A 152-amino-acid chain; its full sequence is Deoxyuridine 5'-triphosphate nucleotidohydrolase (152 aa).

Substrate-binding positions include 71 to 73 (RSG), Asn-84, 88 to 90 (LID), and Met-98.

It belongs to the dUTPase family. Mg(2+) serves as cofactor.

The catalysed reaction is dUTP + H2O = dUMP + diphosphate + H(+). It participates in pyrimidine metabolism; dUMP biosynthesis; dUMP from dCTP (dUTP route): step 2/2. This enzyme is involved in nucleotide metabolism: it produces dUMP, the immediate precursor of thymidine nucleotides and it decreases the intracellular concentration of dUTP so that uracil cannot be incorporated into DNA. The sequence is that of Deoxyuridine 5'-triphosphate nucleotidohydrolase from Aeromonas salmonicida (strain A449).